The following is a 283-amino-acid chain: Urease accessory protein UreD 1 (283 aa).

The protein belongs to the UreD family. As to quaternary structure, ureD, UreF and UreG form a complex that acts as a GTP-hydrolysis-dependent molecular chaperone, activating the urease apoprotein by helping to assemble the nickel containing metallocenter of UreC. The UreE protein probably delivers the nickel.

It localises to the cytoplasm. In terms of biological role, required for maturation of urease via the functional incorporation of the urease nickel metallocenter. The polypeptide is Urease accessory protein UreD 1 (Brucella anthropi (strain ATCC 49188 / DSM 6882 / CCUG 24695 / JCM 21032 / LMG 3331 / NBRC 15819 / NCTC 12168 / Alc 37) (Ochrobactrum anthropi)).